Consider the following 284-residue polypeptide: Undecaprenyl-diphosphatase (284 aa).

8 helical membrane passes run Ile7–Leu27, Glu44–His64, Leu90–Asp110, Phe116–Ile136, Val167–Ile187, Phe197–Phe217, Phe229–Phe249, and Phe259–Phe279.

It belongs to the UppP family.

It localises to the cell membrane. It carries out the reaction di-trans,octa-cis-undecaprenyl diphosphate + H2O = di-trans,octa-cis-undecaprenyl phosphate + phosphate + H(+). In terms of biological role, catalyzes the dephosphorylation of undecaprenyl diphosphate (UPP). Confers resistance to bacitracin. The chain is Undecaprenyl-diphosphatase from Lactococcus lactis subsp. cremoris (strain MG1363).